A 185-amino-acid polypeptide reads, in one-letter code: Putative manganese efflux pump MntP (185 aa).

A run of 6 helical transmembrane segments spans residues 8 to 28, 42 to 62, 66 to 86, 103 to 123, 137 to 157, and 165 to 185; these read LFVI…SIGL, ISFG…GVLF, ILVI…ILML, MYFI…FTVL, IFIG…SGYL, and KYAN…MIFM.

The protein belongs to the MntP (TC 9.B.29) family.

It localises to the cell membrane. Probably functions as a manganese efflux pump. The sequence is that of Putative manganese efflux pump MntP from Clostridium novyi (strain NT).